The following is a 757-amino-acid chain: Xaa-Pro dipeptidyl-peptidase (757 aa).

Active-site charge relay system residues include Ser348, Asp468, and His498.

The protein belongs to the peptidase S15 family. In terms of assembly, homodimer.

The protein resides in the cytoplasm. It carries out the reaction Hydrolyzes Xaa-Pro-|- bonds to release unblocked, N-terminal dipeptides from substrates including Ala-Pro-|-p-nitroanilide and (sequentially) Tyr-Pro-|-Phe-Pro-|-Gly-Pro-|-Ile.. In terms of biological role, removes N-terminal dipeptides sequentially from polypeptides having unsubstituted N-termini provided that the penultimate residue is proline. The sequence is that of Xaa-Pro dipeptidyl-peptidase from Streptococcus pneumoniae (strain Hungary19A-6).